The sequence spans 99 residues: Progonadoliberin-1 (99 aa).

Positions 1–26 (MAAQTFALRLLLVGTLLGTLLGQGCC) are cleaved as a signal peptide. Residue Q27 is modified to Pyrrolidone carboxylic acid. G36 is subject to Glycine amide.

Belongs to the GnRH family.

It localises to the secreted. Stimulates the secretion of gonadotropins. The chain is Progonadoliberin-1 (gnrh1) from Dicentrarchus labrax (European seabass).